Reading from the N-terminus, the 779-residue chain is Neutral ceramidase 1 (779 aa).

The active-site Nucleophile is the Ser-350. N-linked (GlcNAc...) asparagine glycans are attached at residues Asn-368, Asn-432, and Asn-667.

It belongs to the neutral ceramidase family. Mostly expressed in stems, leaves, roots and siliques, and, to a lower extent, in flowers.

It is found in the secreted. Its subcellular location is the endoplasmic reticulum. The protein localises to the golgi apparatus. The enzyme catalyses an N-acylsphing-4-enine + H2O = sphing-4-enine + a fatty acid. Functionally, hydrolyzes the sphingolipid ceramide into sphingosine and free fatty acid. Regulates sphingolipid homeostasis. Promotes oxidative stress resistance. The polypeptide is Neutral ceramidase 1 (Arabidopsis thaliana (Mouse-ear cress)).